Reading from the N-terminus, the 185-residue chain is Peptidyl-tRNA hydrolase (185 aa).

A tRNA-binding site is contributed by Tyr-14. His-19 serves as the catalytic Proton acceptor. Residues Tyr-64, Asn-66, and Asn-112 each coordinate tRNA.

It belongs to the PTH family. Monomer.

It is found in the cytoplasm. It carries out the reaction an N-acyl-L-alpha-aminoacyl-tRNA + H2O = an N-acyl-L-amino acid + a tRNA + H(+). Its function is as follows. Hydrolyzes ribosome-free peptidyl-tRNAs (with 1 or more amino acids incorporated), which drop off the ribosome during protein synthesis, or as a result of ribosome stalling. In terms of biological role, catalyzes the release of premature peptidyl moieties from peptidyl-tRNA molecules trapped in stalled 50S ribosomal subunits, and thus maintains levels of free tRNAs and 50S ribosomes. This Pediococcus pentosaceus (strain ATCC 25745 / CCUG 21536 / LMG 10740 / 183-1w) protein is Peptidyl-tRNA hydrolase.